Here is a 182-residue protein sequence, read N- to C-terminus: Putative manganese efflux pump MntP (182 aa).

6 helical membrane passes run 6 to 26 (TVLV…GVGT), 37 to 57 (LSFH…FVGS), 59 to 79 (AADL…LFIG), 104 to 126 (SSLV…SFGI), 131 to 149 (LFLS…TWGA), and 164 to 181 (METV…KLLL).

It belongs to the MntP (TC 9.B.29) family.

It localises to the cell inner membrane. In terms of biological role, probably functions as a manganese efflux pump. This Syntrophobacter fumaroxidans (strain DSM 10017 / MPOB) protein is Putative manganese efflux pump MntP.